The chain runs to 59 residues: Photosystem II reaction center protein K (59 aa).

Residues 1–22 constitute a propeptide that is removed on maturation; the sequence is MLNIFSLICLNSALHSSSFFFA. The helical transmembrane segment at 38–58 threads the bilayer; the sequence is MPVIPVLFFLLALVWQAAVSF.

The protein belongs to the PsbK family. As to quaternary structure, PSII is composed of 1 copy each of membrane proteins PsbA, PsbB, PsbC, PsbD, PsbE, PsbF, PsbH, PsbI, PsbJ, PsbK, PsbL, PsbM, PsbT, PsbX, PsbY, PsbZ, Psb30/Ycf12, at least 3 peripheral proteins of the oxygen-evolving complex and a large number of cofactors. It forms dimeric complexes.

The protein localises to the plastid. It is found in the chloroplast thylakoid membrane. Its function is as follows. One of the components of the core complex of photosystem II (PSII). PSII is a light-driven water:plastoquinone oxidoreductase that uses light energy to abstract electrons from H(2)O, generating O(2) and a proton gradient subsequently used for ATP formation. It consists of a core antenna complex that captures photons, and an electron transfer chain that converts photonic excitation into a charge separation. This is Photosystem II reaction center protein K from Calycanthus floridus var. glaucus (Eastern sweetshrub).